A 1512-amino-acid chain; its full sequence is Bifunctional glutamate/proline--tRNA ligase (1512 aa).

Residues 164-759 (GTKWDVSGNR…SSVLYSRVAV (596 aa)) form a glutamate--tRNA ligase region. Residues 204–214 (PEASGYLHIGH) carry the 'HIGH' region motif. The tract at residues 294–315 (TPAEQMKAEREQRTESKHRKNS) is disordered. Positions 299–308 (MKAEREQRTE) are enriched in basic and acidic residues. At Lys-300 the chain carries N6-acetyllysine; alternate. Position 300 is an N6-malonyllysine; alternate (Lys-300). At Thr-355 the chain carries Phosphothreonine. Lys-417 is modified (N6-acetyllysine). The 'KMSKS' region signature appears at 432–436 (VLSKR). Phosphoserine is present on Ser-434. Lys-498, Lys-535, Lys-542, and Lys-637 each carry N6-acetyllysine. Over residues 709–736 (EMPTSGSKEKTKVEISKKETSSAPKERP) the composition is skewed to basic and acidic residues. Residues 709–742 (EMPTSGSKEKTKVEISKKETSSAPKERPAPAVSS) form a disordered region. A WHEP-TRS 1 domain is found at 749 to 805 (DSSVLYSRVAVQGDVVRELKAKKAPKEDIDAAVKQLLTLKAEYKEKTGQEYKPGNPS). Residues 760–956 (QGDVVRELKA…GIEYKPVSAT (197 aa)) form a 3 X 57 AA approximate repeats region. Residue Lys-788 is modified to N6-acetyllysine. A disordered region spans residues 795–819 (TGQEYKPGNPSAAAVQTVSTKSSSN). Residues 808–819 (AVQTVSTKSSSN) show a composition bias toward polar residues. The WHEP-TRS 2 domain occupies 822–878 (ESTSLYNKVAAQGEVVRKLKAEKAPKAKVTEAVECLLSLKAEYKEKTGKDYVPGQPP). N6-acetyllysine is present on Lys-861. Disordered stretches follow at residues 869–898 (GKDY…GAEK) and 956–1011 (TGAE…PKKQ). Tyr-872 bears the Phosphotyrosine mark. Residues 878-892 (PASQNSHSNPVSNAQ) show a composition bias toward polar residues. Residue Ser-885 is modified to Phosphoserine. In terms of domain architecture, WHEP-TRS 3 spans 900 to 956 (EAKVLFDRVACQGEVVRKLKAEKASKDQVDSAVQELLQLKAQYKSLTGIEYKPVSAT). The segment covering 958–976 (AEDKDKKKKEKENKSEKQN) has biased composition (basic and acidic residues). The span at 997 to 1006 (LSSGGAGEGQ) shows a compositional bias: gly residues. Ser-998 is modified (phosphoserine). Residue Ser-999 is modified to Phosphoserine; by RPS6KB1. Positions 1007-1512 (GPKKQTRLGL…KFYTLFGRSY (506 aa)) are proline--tRNA ligase. Residues 1121–1123 (TSE) and Arg-1152 each bind L-proline. Residues Arg-1152, Glu-1154, Arg-1163, Thr-1164, Gln-1237, and Thr-1240 each contribute to the ATP site. Arg-1152 is modified (omega-N-methylarginine). Gln-1237 is a Mg(2+) binding site. An L-proline-binding site is contributed by His-1242. Positions 1276 and 1278 each coordinate ATP. Residue Ser-1350 is modified to Phosphoserine. The Zn(2+) site is built by Cys-1448, Cys-1453, Cys-1495, and Cys-1497. Lys-1503 carries the post-translational modification N6-acetyllysine.

The protein in the N-terminal section; belongs to the class-I aminoacyl-tRNA synthetase family. Glutamate--tRNA ligase type 2 subfamily. In the C-terminal section; belongs to the class-II aminoacyl-tRNA synthetase family. As to quaternary structure, homodimer. Part of the aminoacyl-tRNA synthetase multienzyme complex, also know as multisynthetase complex, that is composed of the tRNA ligases for Arg (RARS1), Asp (DARS1), Gln (QARS1), Ile (IARS1), Leu (LARS1), Lys (KARS1), Met (MARS1) the bifunctional ligase for Glu and Pro (EPRS1) and the auxiliary subunits AIMP1/p43, AIMP2/p38 and EEF1E1/p18. Forms a linear complex that contains MARS1, EEF1E1, EPRS1 and AIMP2 that is at the core of the multisubunit complex. Interacts with TARS3. Interacts with DUS2L. Component of the GAIT complex which is composed of EPRS1, RPL13A and GAPDH. Interacts (phosphorylated at Ser-999) with SLC27A1; mediates the translocation of SLC27A1 from the cytoplasm to the plasma membrane thereby increasing the uptake of long-chain fatty acids. Post-translationally, phosphorylated at Ser-999 by RPS6KB1; triggers EPRS1 release from the aminoacyl-tRNA synthetase multienzyme complex. In monocytes, the IFN-gamma-induced phosphorylation at Ser-999 releases EPRS1 from the aminoacyl-tRNA synthetase multienzyme complex, allowing its association with the GAIT complex. Phosphorylation at Ser-999 is specifically required for the RPL13A-mediated interaction of the GAIT complex with eIF4G. Phosphorylation at Ser-999 by RPS6KB1, is also induced by insulin through activation of the mTORC1 signaling pathway and promotes the interaction of EPRS1 with SLC27A1.

Its subcellular location is the cytoplasm. It is found in the cytosol. The protein localises to the membrane. The enzyme catalyses tRNA(Glu) + L-glutamate + ATP = L-glutamyl-tRNA(Glu) + AMP + diphosphate. It carries out the reaction tRNA(Pro) + L-proline + ATP = L-prolyl-tRNA(Pro) + AMP + diphosphate. In terms of biological role, multifunctional protein which primarily functions within the aminoacyl-tRNA synthetase multienzyme complex, also known as multisynthetase complex. Within the complex it catalyzes the attachment of both L-glutamate and L-proline to their cognate tRNAs in a two-step reaction where the amino acid is first activated by ATP to form a covalent intermediate with AMP. Subsequently, the activated amino acid is transferred to the acceptor end of the cognate tRNA to form L-glutamyl-tRNA(Glu) and L-prolyl-tRNA(Pro). Upon interferon-gamma stimulation, EPRS1 undergoes phosphorylation, causing its dissociation from the aminoacyl-tRNA synthetase multienzyme complex. It is recruited to form the GAIT complex, which binds to stem loop-containing GAIT elements found in the 3'-UTR of various inflammatory mRNAs, such as ceruloplasmin. The GAIT complex inhibits the translation of these mRNAs, allowing interferon-gamma to redirect the function of EPRS1 from protein synthesis to translation inhibition in specific cell contexts. Furthermore, it can function as a downstream effector in the mTORC1 signaling pathway, by promoting the translocation of SLC27A1 from the cytoplasm to the plasma membrane where it mediates the uptake of long-chain fatty acid by adipocytes. Thereby, EPRS1 also plays a role in fat metabolism and more indirectly influences lifespan. This is Bifunctional glutamate/proline--tRNA ligase from Mus musculus (Mouse).